We begin with the raw amino-acid sequence, 155 residues long: Protein E6 (155 aa).

Zinc fingers lie at residues 39–75 (CNFC…CRCC) and 112–148 (CQNC…CRLC).

Belongs to the papillomaviridae E6 protein family. As to quaternary structure, forms homodimers. Interacts with ubiquitin-protein ligase UBE3A/E6-AP; this interaction stimulates UBE3A ubiquitin activity. Interacts with host BAK1.

It localises to the host cytoplasm. The protein resides in the host nucleus. Its function is as follows. Plays a major role in the induction and maintenance of cellular transformation. E6 associates with host UBE3A/E6-AP ubiquitin-protein ligase and modulates its activity. Protects host keratinocytes from apoptosis by mediating the degradation of host BAK1. May also inhibit host immune response. The polypeptide is Protein E6 (Homo sapiens (Human)).